Consider the following 640-residue polypeptide: Chaperone protein DnaK (640 aa).

Threonine 196 is subject to Phosphothreonine; by autocatalysis. 2 disordered regions span residues 487-526 and 593-640; these read GKEQSIKIESSSKLTDAEISKMKEDAKEHAAEDQKRKEEI and SHLY…GNDK. Over residues 501-526 the composition is skewed to basic and acidic residues; that stretch reads TDAEISKMKEDAKEHAAEDQKRKEEI. Positions 595–613 are enriched in polar residues; it reads LYQSQGPESSQPETAAQSD. Positions 630–640 are enriched in acidic residues; the sequence is AEYEVIDGNDK.

It belongs to the heat shock protein 70 family.

Its function is as follows. Acts as a chaperone. The chain is Chaperone protein DnaK from Pelodictyon phaeoclathratiforme (strain DSM 5477 / BU-1).